We begin with the raw amino-acid sequence, 328 residues long: Sulfate adenylyltransferase subunit 2 (328 aa).

2 disordered regions span residues 15–34 (AAPD…PSSH) and 304–328 (SERE…EGYF).

The protein belongs to the PAPS reductase family. CysD subfamily. In terms of assembly, heterodimer composed of CysD, the smaller subunit, and CysN.

The catalysed reaction is sulfate + ATP + H(+) = adenosine 5'-phosphosulfate + diphosphate. It functions in the pathway sulfur metabolism; hydrogen sulfide biosynthesis; sulfite from sulfate: step 1/3. In terms of biological role, with CysN forms the ATP sulfurylase (ATPS) that catalyzes the adenylation of sulfate producing adenosine 5'-phosphosulfate (APS) and diphosphate, the first enzymatic step in sulfur assimilation pathway. APS synthesis involves the formation of a high-energy phosphoric-sulfuric acid anhydride bond driven by GTP hydrolysis by CysN coupled to ATP hydrolysis by CysD. The chain is Sulfate adenylyltransferase subunit 2 from Rhodopseudomonas palustris (strain BisA53).